The chain runs to 902 residues: Cytosolic 10-formyltetrahydrofolate dehydrogenase (902 aa).

The tract at residues 1-310 (MKIAVIGQSL…PASQYFKTAD (310 aa)) is hydrolase domain. 88 to 90 (QFI) is a binding site for (6R)-10-formyltetrahydrofolate. The active-site Proton donor is the histidine 106. A (6R)-10-formyltetrahydrofolate-binding site is contributed by aspartate 142. One can recognise a Carrier domain in the interval 318-395 (EEEQKVSEEI…EFIQMVVRRM (78 aa)). Position 354 is an O-(pantetheine 4'-phosphoryl)serine (serine 354). The aldehyde dehydrogenase domain stretch occupies residues 417-902 (TVKIPHQLFI…LKTKAVTIEY (486 aa)). NADP(+) contacts are provided by residues 571-573 (IPW), 597-600 (KPAQ), 630-635 (GSLIGQ), 650-651 (GS), and 673-674 (EL). Residue glutamate 673 is the Proton acceptor of the active site. Cysteine 707 acts as the Proton donor in catalysis. NADP(+) contacts are provided by residues lysine 757 and 804-806 (ESF).

It in the N-terminal section; belongs to the GART family. The protein in the C-terminal section; belongs to the aldehyde dehydrogenase family. ALDH1L subfamily. In terms of assembly, homotetramer. Phosphopantetheinylation at Ser-354 by AASDHPPT is required for the formyltetrahydrofolate dehydrogenase activity.

It localises to the cytoplasm. It is found in the cytosol. The enzyme catalyses (6R)-10-formyltetrahydrofolate + NADP(+) + H2O = (6S)-5,6,7,8-tetrahydrofolate + CO2 + NADPH + H(+). Cytosolic 10-formyltetrahydrofolate dehydrogenase that catalyzes the NADP(+)-dependent conversion of 10-formyltetrahydrofolate to tetrahydrofolate and carbon dioxide. May also have an NADP(+)-dependent aldehyde dehydrogenase activity towards formaldehyde, acetaldehyde, propionaldehyde, and benzaldehyde. The chain is Cytosolic 10-formyltetrahydrofolate dehydrogenase (aldh1l1) from Xenopus laevis (African clawed frog).